The following is a 325-amino-acid chain: UDP-N-acetylenolpyruvoylglucosamine reductase (325 aa).

An FAD-binding PCMH-type domain is found at 40–221 (RTGGLAELFY…RAAMDEVALH (182 aa)). Residue Arg186 is part of the active site. The active-site Proton donor is the Ser235. Glu305 is an active-site residue.

Belongs to the MurB family. Requires FAD as cofactor.

It is found in the cytoplasm. It catalyses the reaction UDP-N-acetyl-alpha-D-muramate + NADP(+) = UDP-N-acetyl-3-O-(1-carboxyvinyl)-alpha-D-glucosamine + NADPH + H(+). Its pathway is cell wall biogenesis; peptidoglycan biosynthesis. Its function is as follows. Cell wall formation. This chain is UDP-N-acetylenolpyruvoylglucosamine reductase, found in Bartonella henselae (strain ATCC 49882 / DSM 28221 / CCUG 30454 / Houston 1) (Rochalimaea henselae).